We begin with the raw amino-acid sequence, 475 residues long: UDP-glucosyltransferase UGT13248 (475 aa).

A compositionally biased stretch (low complexity) spans 1 to 17; that stretch reads METTVTAVSGTTSSSVG. The disordered stretch occupies residues 1-20; it reads METTVTAVSGTTSSSVGHGA. Residues histidine 38, serine 152, threonine 299, cysteine 352, 369 to 377, and 393 to 394 each bind UDP-alpha-D-glucose; these read HCGWNSTLE and DQ.

It belongs to the UDP-glycosyltransferase family.

Its function is as follows. Involved in the detoxification of the Fusarium mycotoxin deoxynivalenol by the transfer of glucose from UDP-D-glucose to the hydroxyl group at C-3, forming deoxynivalenol-3-O-beta-D-glucoside. This is UDP-glucosyltransferase UGT13248 from Hordeum vulgare subsp. vulgare (Domesticated barley).